Reading from the N-terminus, the 232-residue chain is Flagellar L-ring protein (232 aa).

The N-terminal stretch at 1 to 15 (MKKVLFYVLPFAFFG) is a signal peptide. Cysteine 16 carries N-palmitoyl cysteine lipidation. Residue cysteine 16 is the site of S-diacylglycerol cysteine attachment.

Belongs to the FlgH family. In terms of assembly, the basal body constitutes a major portion of the flagellar organelle and consists of four rings (L,P,S, and M) mounted on a central rod.

It localises to the cell outer membrane. The protein resides in the bacterial flagellum basal body. Its function is as follows. Assembles around the rod to form the L-ring and probably protects the motor/basal body from shearing forces during rotation. The polypeptide is Flagellar L-ring protein (Campylobacter jejuni subsp. jejuni serotype O:6 (strain 81116 / NCTC 11828)).